Consider the following 352-residue polypeptide: Holliday junction branch migration complex subunit RuvB (352 aa).

Positions 4–191 (TDKLAAPARV…FGIVARLEFY (188 aa)) are large ATPase domain (RuvB-L). Residues Leu-30, Arg-31, Gly-72, Lys-75, Thr-76, Thr-77, 138–140 (EDY), Arg-181, Tyr-191, and Arg-228 contribute to the ATP site. Thr-76 serves as a coordination point for Mg(2+). Residues 192-262 (TADELARIVT…MADAALAMLD (71 aa)) are small ATPAse domain (RuvB-S). Residues 265–352 (SVGFDLMDRK…SGASELFGDA (88 aa)) form a head domain (RuvB-H) region. Residues Arg-301, Arg-320, and Arg-325 each coordinate DNA.

Belongs to the RuvB family. Homohexamer. Forms an RuvA(8)-RuvB(12)-Holliday junction (HJ) complex. HJ DNA is sandwiched between 2 RuvA tetramers; dsDNA enters through RuvA and exits via RuvB. An RuvB hexamer assembles on each DNA strand where it exits the tetramer. Each RuvB hexamer is contacted by two RuvA subunits (via domain III) on 2 adjacent RuvB subunits; this complex drives branch migration. In the full resolvosome a probable DNA-RuvA(4)-RuvB(12)-RuvC(2) complex forms which resolves the HJ.

The protein localises to the cytoplasm. The enzyme catalyses ATP + H2O = ADP + phosphate + H(+). The RuvA-RuvB-RuvC complex processes Holliday junction (HJ) DNA during genetic recombination and DNA repair, while the RuvA-RuvB complex plays an important role in the rescue of blocked DNA replication forks via replication fork reversal (RFR). RuvA specifically binds to HJ cruciform DNA, conferring on it an open structure. The RuvB hexamer acts as an ATP-dependent pump, pulling dsDNA into and through the RuvAB complex. RuvB forms 2 homohexamers on either side of HJ DNA bound by 1 or 2 RuvA tetramers; 4 subunits per hexamer contact DNA at a time. Coordinated motions by a converter formed by DNA-disengaged RuvB subunits stimulates ATP hydrolysis and nucleotide exchange. Immobilization of the converter enables RuvB to convert the ATP-contained energy into a lever motion, pulling 2 nucleotides of DNA out of the RuvA tetramer per ATP hydrolyzed, thus driving DNA branch migration. The RuvB motors rotate together with the DNA substrate, which together with the progressing nucleotide cycle form the mechanistic basis for DNA recombination by continuous HJ branch migration. Branch migration allows RuvC to scan DNA until it finds its consensus sequence, where it cleaves and resolves cruciform DNA. The protein is Holliday junction branch migration complex subunit RuvB of Cupriavidus necator (strain ATCC 17699 / DSM 428 / KCTC 22496 / NCIMB 10442 / H16 / Stanier 337) (Ralstonia eutropha).